Consider the following 887-residue polypeptide: Collagen alpha-2(I) chain (887 aa).

Residues 1 to 42 (GPMGIMGPRGPPGASGAPGPQGFQGPPGEPGEPGQTGPAGAR) show a composition bias toward low complexity. Positions 1-887 (GPMGIMGPRG…PGPPGPPGPS (887 aa)) are disordered. A compositionally biased stretch (basic and acidic residues) spans 51–65 (AGEDGHPGKPGRSGE). Composition is skewed to low complexity over residues 126–155 (VGAP…SAGP), 170–194 (PVGS…VSGP), 221–236 (PGPV…RGIV), 278–290 (IRGS…IPGA), 368–388 (AGIA…AQGP), 444–455 (PGESGAAGPTGP), and 473–503 (EPGV…IPGP). The span at 504 to 517 (KGEKGEPGIRRDGA) shows a compositional bias: basic and acidic residues. Composition is skewed to low complexity over residues 518–533 (RGAP…AGAN), 560–580 (VGPA…QPGA), 595–605 (ATGFPGAAGRT), 658–673 (PGPQ…IGIP), 690–720 (EPGP…APGE), and 766–782 (EPGP…VGPR). Residues 791–802 (RGDKGEPGDKGP) are compositionally biased toward basic and acidic residues. Residues 872–887 (AGPPGPPGPPGPPGPS) are compositionally biased toward pro residues.

The protein belongs to the fibrillar collagen family. Trimers of one alpha 2(I) and two alpha 1(I) chains. Interacts (via C-terminus) with TMEM131 (via PapD-L domain); the interaction is direct and is involved in assembly and TRAPPIII ER-to-Golgi transport complex-dependent secretion of collagen. Prolines at the third position of the tripeptide repeating unit (G-X-Y) are hydroxylated in some or all of the chains. Forms the fibrils of tendon, ligaments and bones. In bones, the fibrils are mineralized with calcium hydroxyapatite.

It localises to the secreted. Its subcellular location is the extracellular space. The protein resides in the extracellular matrix. In terms of biological role, type I collagen is a member of group I collagen (fibrillar forming collagen). This is Collagen alpha-2(I) chain from Hippopotamus amphibius (Hippopotamus).